We begin with the raw amino-acid sequence, 2298 residues long: Protein Ycf2 (2298 aa).

An ATP-binding site is contributed by 1640 to 1647; it reads GSIGTGRS.

Belongs to the Ycf2 family.

Its subcellular location is the plastid. The protein resides in the chloroplast stroma. In terms of biological role, probable ATPase of unknown function. Its presence in a non-photosynthetic plant (Epifagus virginiana) and experiments in tobacco indicate that it has an essential function which is probably not related to photosynthesis. The polypeptide is Protein Ycf2 (Carica papaya (Papaya)).